The primary structure comprises 310 residues: Protein LRATD2 (310 aa).

The disordered stretch occupies residues 1–76 (MGNQVEKLTH…PPPQPQPYDP (76 aa)). Over residues 54 to 64 (PDGGGLPDGGD) the composition is skewed to gly residues. Residues 65–74 (GPPPPQPQPY) show a composition bias toward pro residues. The 96-residue stretch at 122–217 (VEFVSQAQYP…CRYGKREFKI (96 aa)) folds into the LRAT domain. Residues 274-310 (HPAEPEEGDSNVARTTPPPGRPPAPSSEEEDGEAVAH) form a disordered region. Residues 289–298 (TPPPGRPPAP) show a composition bias toward pro residues. The span at 300–310 (SEEEDGEAVAH) shows a compositional bias: acidic residues.

This sequence belongs to the LRATD family. As to expression, expressed in esophageal squamous cell carcinomas.

The chain is Protein LRATD2 from Homo sapiens (Human).